Reading from the N-terminus, the 247-residue chain is 4-hydroxy-tetrahydrodipicolinate reductase (247 aa).

Residues 12–17 (GITGRM), 78–80 (GTT), and 102–105 (AANF) each bind NAD(+). His136 functions as the Proton donor/acceptor in the catalytic mechanism. Residue His137 participates in (S)-2,3,4,5-tetrahydrodipicolinate binding. Lys140 acts as the Proton donor in catalysis. 146-147 (GT) lines the (S)-2,3,4,5-tetrahydrodipicolinate pocket.

This sequence belongs to the DapB family.

The protein localises to the cytoplasm. The catalysed reaction is (S)-2,3,4,5-tetrahydrodipicolinate + NAD(+) + H2O = (2S,4S)-4-hydroxy-2,3,4,5-tetrahydrodipicolinate + NADH + H(+). The enzyme catalyses (S)-2,3,4,5-tetrahydrodipicolinate + NADP(+) + H2O = (2S,4S)-4-hydroxy-2,3,4,5-tetrahydrodipicolinate + NADPH + H(+). The protein operates within amino-acid biosynthesis; L-lysine biosynthesis via DAP pathway; (S)-tetrahydrodipicolinate from L-aspartate: step 4/4. Its function is as follows. Catalyzes the conversion of 4-hydroxy-tetrahydrodipicolinate (HTPA) to tetrahydrodipicolinate. The chain is 4-hydroxy-tetrahydrodipicolinate reductase from Acidiphilium cryptum (strain JF-5).